The following is a 322-amino-acid chain: Deoxyhypusine hydroxylase (322 aa).

4 HEAT-like PBS-type repeats span residues 76-102 (LKHE…VMLD), 109-135 (VRHE…SRRE), 234-260 (FKHE…VLKR), and 267-293 (VRHE…HLQD). Fe cation is bound by residues His-78, Glu-79, His-111, Glu-112, His-236, Glu-237, His-269, and Glu-270.

The protein belongs to the deoxyhypusine hydroxylase family. The cofactor is Fe(2+).

Its subcellular location is the cytoplasm. It is found in the nucleus. It catalyses the reaction [eIF5A protein]-deoxyhypusine + AH2 + O2 = [eIF5A protein]-hypusine + A + H2O. It functions in the pathway protein modification; eIF5A hypusination. Catalyzes the hydroxylation of the N(6)-(4-aminobutyl)-L-lysine intermediate to form hypusine, an essential post-translational modification only found in mature eIF-5A factor. The chain is Deoxyhypusine hydroxylase from Eremothecium gossypii (strain ATCC 10895 / CBS 109.51 / FGSC 9923 / NRRL Y-1056) (Yeast).